The following is a 238-amino-acid chain: MRPSKRAADEMRAVSFERGISKHAEGSCLVKFGDTHVLCTASLEEKVPGWMRNTGKGWVTAEYGMLPRSTGDRMRREAAAGKQGGRTQEIQRLIGRSLRAVVDMQALGEVQITVDCDVIQADGGTRTAAITGGWVALHECLRWMEARQMVRVEKVLKDHIAAISCGIYEGEPVLDLDYAEDSVAETDSNFVMTGKGGIVEIQGTAEGAPFSEEEFANLMKLARGGIDRLVSLQKMAVA.

Phosphate contacts are provided by residues Arg-86 and 124-126; that span reads GTR.

Belongs to the RNase PH family. In terms of assembly, homohexameric ring arranged as a trimer of dimers.

It catalyses the reaction tRNA(n+1) + phosphate = tRNA(n) + a ribonucleoside 5'-diphosphate. Phosphorolytic 3'-5' exoribonuclease that plays an important role in tRNA 3'-end maturation. Removes nucleotide residues following the 3'-CCA terminus of tRNAs; can also add nucleotides to the ends of RNA molecules by using nucleoside diphosphates as substrates, but this may not be physiologically important. Probably plays a role in initiation of 16S rRNA degradation (leading to ribosome degradation) during starvation. In Brucella anthropi (strain ATCC 49188 / DSM 6882 / CCUG 24695 / JCM 21032 / LMG 3331 / NBRC 15819 / NCTC 12168 / Alc 37) (Ochrobactrum anthropi), this protein is Ribonuclease PH.